The following is a 471-amino-acid chain: ATP synthase subunit beta (471 aa).

158-165 (GGAGCGKT) serves as a coordination point for ATP.

It belongs to the ATPase alpha/beta chains family. F-type ATPases have 2 components, CF(1) - the catalytic core - and CF(0) - the membrane proton channel. CF(1) has five subunits: alpha(3), beta(3), gamma(1), delta(1), epsilon(1). CF(0) has three main subunits: a(1), b(2) and c(9-12). The alpha and beta chains form an alternating ring which encloses part of the gamma chain. CF(1) is attached to CF(0) by a central stalk formed by the gamma and epsilon chains, while a peripheral stalk is formed by the delta and b chains.

It is found in the cell inner membrane. It carries out the reaction ATP + H2O + 4 H(+)(in) = ADP + phosphate + 5 H(+)(out). Functionally, produces ATP from ADP in the presence of a proton gradient across the membrane. The catalytic sites are hosted primarily by the beta subunits. The protein is ATP synthase subunit beta of Desulfotalea psychrophila (strain LSv54 / DSM 12343).